We begin with the raw amino-acid sequence, 287 residues long: Shikimate dehydrogenase (NADP(+)) (287 aa).

Shikimate contacts are provided by residues 20 to 22 (SRS) and Thr-67. The Proton acceptor role is filled by Lys-71. Glu-84 lines the NADP(+) pocket. 2 residues coordinate shikimate: Asn-93 and Asp-108. NADP(+) is bound by residues 132–136 (GAGGA) and Met-226. Tyr-228 is a shikimate binding site. Residue Gly-250 participates in NADP(+) binding.

The protein belongs to the shikimate dehydrogenase family. In terms of assembly, homodimer.

It carries out the reaction shikimate + NADP(+) = 3-dehydroshikimate + NADPH + H(+). It participates in metabolic intermediate biosynthesis; chorismate biosynthesis; chorismate from D-erythrose 4-phosphate and phosphoenolpyruvate: step 4/7. Functionally, involved in the biosynthesis of the chorismate, which leads to the biosynthesis of aromatic amino acids. Catalyzes the reversible NADPH linked reduction of 3-dehydroshikimate (DHSA) to yield shikimate (SA). This Bordetella petrii (strain ATCC BAA-461 / DSM 12804 / CCUG 43448) protein is Shikimate dehydrogenase (NADP(+)).